We begin with the raw amino-acid sequence, 203 residues long: Probable GTP-binding protein EngB (203 aa).

Residues 1-190 (MPEIVLVGRS…LEALQERVRK (190 aa)) form the EngB-type G domain. GTP-binding positions include 8–15 (GRSNVGKS), 35–39 (GVTRK), 53–56 (DMPG), 132–135 (NKID), and 169–171 (ISA). Residues Ser-15 and Thr-37 each contribute to the Mg(2+) site.

The protein belongs to the TRAFAC class TrmE-Era-EngA-EngB-Septin-like GTPase superfamily. EngB GTPase family. Mg(2+) is required as a cofactor.

Necessary for normal cell division and for the maintenance of normal septation. This Methanopyrus kandleri (strain AV19 / DSM 6324 / JCM 9639 / NBRC 100938) protein is Probable GTP-binding protein EngB.